Here is a 1154-residue protein sequence, read N- to C-terminus: MLERSLLLATLLSALCSANLFGNNSYVYYYQSAFRPPDGWHLHGGAYEVVNVFTESSNAGTTGCTVGAIYWSKNFSAASVAMTAPQNGMSWSTEQFCTAHCNFTDFVVFVTHCYKSSHGSCPLTGLIPQNHIRISAMKNSSLFYNLTVAVTKYPRFKSLQCVNNMTSVYLNGDLVFTSNETKDVSAAGVHFKAGGPITYKVMREVKALAYFVNGTAQDVILCDGSPTGLLACQYNTGNFSDGFYPFTNSSLVKEKFIVYRESSVNTTLELTNFTFSNVSNATPNTGGVQTIQLYQTSTAQSGYYNLNFSFLSSFIYKASDYMYGSYHPSCKFRLETINNGLWFNSLSVSLGYGPIQGGCKQSVFANRATCCYAYSYNGPSLCKGVYRGELTKSFECGLLVFVTKTDGSRIQTRNEPFTLTQHNYNNITLDRCVEYNIYGRVGQGFITNVTNYAINYNYLADGGMAILDTSGAIDIFVVQGEYGLNYYKVNPCEDVNQQFVVSGGKLVGILTSRNETGSQPLENQFYIKIINGTRRSRRSITGNVTNCPYVTYGKFCIKPDGSISTIVPKELEHFVAPLLNVTENVLIPDSFNLTVTDEYIQTRMDKVQINCLQYVCGNSLECRKLFQQYGPVCDNILSVVNSVGQKEDMELLHFYSSTKPSGFNTPVLSNVSTGEFNISLLLTPPSSASGRSFIEDLLFTSVESVGLPTDDAYKKCTAGPLGFLKDLACAREYNGLLVLPPIITAEMQTLYTSSLVASMAFGGITSVGAIPFATQLQARINHLGITQSLLLKNQEKIAASFNKAIGHMQEGFRSTSLALQQIQDVVNKQSSILTETMASLNKNFGAISSVLQDIYQQLDSIQADAQVDRIITGRLSSLSVLASAKQAEYYRVSQQRELATQKINECVKSQSIRYSFCGNGRHVLTIPQNAPNGIVFIHFTYTPESFVNVTAIVGFCVNPANASQYAIVPANGRGIFIQVNGSYYITARDMYMPRDITAGDIVTLTSCQANYVSVNKTVITTFVDNDDFDFDDELSKWWNDTKHELPDFDEFNYTVPILDIGSEIDRIQGVIQGLNDSLIDLETLSILKTYIKWPWYVWLAIAFATIIFILILGWLFFMTGCCGCCCGCFGIIPLMSKCGKKSSYYTTFDNDVVT.

The signal sequence occupies residues 1-18 (MLERSLLLATLLSALCSA). Over 19–1096 (NLFGNNSYVY…LKTYIKWPWY (1078 aa)) the chain is Extracellular. N-linked (GlcNAc...) asparagine; by host glycans are attached at residues Asn-23, Asn-74, Asn-102, Asn-139, Asn-145, Asn-164, Asn-179, Asn-213, Asn-238, Asn-248, Asn-265, Asn-272, Asn-277, Asn-307, Asn-426, Asn-448, Asn-514, Asn-531, Asn-543, Asn-580, Asn-592, Asn-670, and Asn-677. The segment at 770–875 (IPFATQLQAR…QVDRIITGRL (106 aa)) is heptad repeat 1 (HR1). A coiled-coil region spans residues 823–867 (QDVVNKQSSILTETMASLNKNFGAISSVLQDIYQQLDSIQADAQV). N-linked (GlcNAc...) asparagine; by host glycosylation is found at Asn-948, Asn-961, Asn-980, Asn-1015, Asn-1039, Asn-1052, and Asn-1075. The interval 1025-1106 (NDDFDFDDEL…VWLAIAFATI (82 aa)) is heptad repeat 2 (HR2). Residues 1056 to 1084 (PILDIGSEIDRIQGVIQGLNDSLIDLETL) are a coiled coil. A helical transmembrane segment spans residues 1097–1117 (VWLAIAFATIIFILILGWLFF). Residues 1118–1154 (MTGCCGCCCGCFGIIPLMSKCGKKSSYYTTFDNDVVT) are Cytoplasmic-facing.

Belongs to the gammacoronaviruses spike protein family. Homotrimer; each monomer consists of a S1 and a S2 subunit. The resulting peplomers protrude from the virus surface as spikes. Specific enzymatic cleavages in vivo yield mature proteins. The precursor is processed into S1 and S2 by host cell furin or furin-like protease to yield the mature S1 and S2 proteins. The cleavage site between S1 and S2 requires the optimal sequence [KR]-X-[KR]-R. Additionally, a second cleavage leads to the release of a fusion peptide after viral attachment to host cell receptor.

It localises to the virion membrane. Its subcellular location is the host endoplasmic reticulum-Golgi intermediate compartment membrane. Attaches the virion to the host cell membrane by interacting with sialic acids, initiating the infection. In terms of biological role, mediates fusion of the virion and cellular membranes by acting as a class I viral fusion protein. Under the current model, the protein has at least 3 conformational states: pre-fusion native state, pre-hairpin intermediate state, and post-fusion hairpin state. During viral and target cell membrane fusion, the coiled coil regions (heptad repeats) assume a trimer-of-hairpins structure, positioning the fusion peptide in close proximity to the C-terminal region of the ectodomain. The formation of this structure appears to drive apposition and subsequent fusion of viral and target cell membranes. Functionally, acts as a viral fusion peptide after S2 cleavage occurring upon virus endocytosis. This chain is Spike glycoprotein, found in Gallus gallus (Chicken).